The chain runs to 137 residues: uncharacterized protein (137 aa).

Residues 1-21 (MFNRRVLFLSVFSCAVFMLSG) form the signal peptide. Residue cysteine 22 is the site of N-palmitoyl cysteine attachment. Cysteine 22 carries the S-diacylglycerol cysteine lipid modification.

It localises to the membrane. This is an uncharacterized protein from Escherichia coli (strain K12).